The chain runs to 246 residues: 3-deoxy-manno-octulosonate cytidylyltransferase (246 aa).

This sequence belongs to the KdsB family.

The protein localises to the cytoplasm. It catalyses the reaction 3-deoxy-alpha-D-manno-oct-2-ulosonate + CTP = CMP-3-deoxy-beta-D-manno-octulosonate + diphosphate. The protein operates within nucleotide-sugar biosynthesis; CMP-3-deoxy-D-manno-octulosonate biosynthesis; CMP-3-deoxy-D-manno-octulosonate from 3-deoxy-D-manno-octulosonate and CTP: step 1/1. It functions in the pathway bacterial outer membrane biogenesis; lipopolysaccharide biosynthesis. Activates KDO (a required 8-carbon sugar) for incorporation into bacterial lipopolysaccharide in Gram-negative bacteria. The chain is 3-deoxy-manno-octulosonate cytidylyltransferase from Leptospira borgpetersenii serovar Hardjo-bovis (strain JB197).